Reading from the N-terminus, the 478-residue chain is Glycogen synthase (478 aa).

Lys-16 lines the ADP-alpha-D-glucose pocket.

The protein belongs to the glycosyltransferase 1 family. Bacterial/plant glycogen synthase subfamily.

It carries out the reaction [(1-&gt;4)-alpha-D-glucosyl](n) + ADP-alpha-D-glucose = [(1-&gt;4)-alpha-D-glucosyl](n+1) + ADP + H(+). Its pathway is glycan biosynthesis; glycogen biosynthesis. Its function is as follows. Synthesizes alpha-1,4-glucan chains using ADP-glucose. In Lachnospira eligens (strain ATCC 27750 / DSM 3376 / VPI C15-48 / C15-B4) (Eubacterium eligens), this protein is Glycogen synthase.